Consider the following 148-residue polypeptide: MATRRILKELKELQRDPPVSCSAGPTGEDMFHWQATIMGPNESPYSGGVFLVNIHFPPDYPFKPPKVVFRTKVFHPNINSNGNICLDILKDQWSPALTISKVLLSICSLLTDPNPDDPLVPEIAHIYKTDKTKYEAMARSWTQKYALF.

The UBC core domain occupies 1 to 147; that stretch reads MATRRILKEL…ARSWTQKYAL (147 aa). C85 (glycyl thioester intermediate) is an active-site residue.

Belongs to the ubiquitin-conjugating enzyme family.

It carries out the reaction S-ubiquitinyl-[E1 ubiquitin-activating enzyme]-L-cysteine + [E2 ubiquitin-conjugating enzyme]-L-cysteine = [E1 ubiquitin-activating enzyme]-L-cysteine + S-ubiquitinyl-[E2 ubiquitin-conjugating enzyme]-L-cysteine.. The protein operates within protein modification; protein ubiquitination. In terms of biological role, accepts the ubiquitin from the E1 complex and catalyzes its covalent attachment to other proteins. The chain is Ubiquitin-conjugating enzyme E2 29 (UBC29) from Arabidopsis thaliana (Mouse-ear cress).